The following is a 91-amino-acid chain: UPF0250 protein Psyr_4360 (91 aa).

The protein belongs to the UPF0250 family.

This Pseudomonas syringae pv. syringae (strain B728a) protein is UPF0250 protein Psyr_4360.